We begin with the raw amino-acid sequence, 306 residues long: MTDKIAVLLGGTSAEREVSLNSGAAVLAGLREGGIDAYPVDPKEVDVTQLKSMGFQKVFIALHGRGGEDGTLQGMLELMGLPYTGSGVMASALSMDKLRSKLLWQGAGLPVAPWVALTRAEFEKGLSDKQLAEISALGLPVIVKPSREGSSVGMSKVVAENALQDALRLAFQHDEEVLIEKWLSGPEFTVAILGEEILPSIRIQPSGTFYDYEAKYLSDETQYFCPAGLEASQEANLQALVLKAWTTLGCKGWGRIDVMLDSDGQFYLLEANTSPGMTSHSLVPMAARQAGMSFSQLVVRILELAD.

Catalysis depends on residues glutamate 15 and serine 150. The ATP-grasp domain maps to 101–303 (KLLWQGAGLP…FSQLVVRILE (203 aa)). Residue 134–189 (ISALGLPVIVKPSREGSSVGMSKVVAENALQDALRLAFQHDEEVLIEKWLSGPEFT) coordinates ATP. Aspartate 257, glutamate 270, and asparagine 272 together coordinate Mg(2+). Residue serine 281 is part of the active site.

This sequence belongs to the D-alanine--D-alanine ligase family. In terms of assembly, monomer. It depends on Mg(2+) as a cofactor. The cofactor is Mn(2+).

It is found in the cytoplasm. It carries out the reaction 2 D-alanine + ATP = D-alanyl-D-alanine + ADP + phosphate + H(+). It functions in the pathway cell wall biogenesis; peptidoglycan biosynthesis. Cell wall formation. The sequence is that of D-alanine--D-alanine ligase B (ddlB) from Escherichia coli (strain K12).